Reading from the N-terminus, the 128-residue chain is Large ribosomal subunit protein bL12 (128 aa).

The protein belongs to the bacterial ribosomal protein bL12 family. Homodimer. Part of the ribosomal stalk of the 50S ribosomal subunit. Forms a multimeric L10(L12)X complex, where L10 forms an elongated spine to which 2 to 4 L12 dimers bind in a sequential fashion. Binds GTP-bound translation factors.

Its function is as follows. Forms part of the ribosomal stalk which helps the ribosome interact with GTP-bound translation factors. Is thus essential for accurate translation. The protein is Large ribosomal subunit protein bL12 of Picosynechococcus sp. (strain ATCC 27264 / PCC 7002 / PR-6) (Agmenellum quadruplicatum).